The following is a 61-amino-acid chain: Large ribosomal subunit protein eL20 (61 aa).

This sequence belongs to the eukaryotic ribosomal protein eL20 family. Part of the 50S ribosomal subunit. Binds 23S rRNA.

The polypeptide is Large ribosomal subunit protein eL20 (Methanosarcina acetivorans (strain ATCC 35395 / DSM 2834 / JCM 12185 / C2A)).